We begin with the raw amino-acid sequence, 244 residues long: tRNA pseudouridine synthase A (244 aa).

Aspartate 52 acts as the Nucleophile in catalysis. Residue tyrosine 110 participates in substrate binding.

Belongs to the tRNA pseudouridine synthase TruA family. Homodimer.

It carries out the reaction uridine(38/39/40) in tRNA = pseudouridine(38/39/40) in tRNA. Its function is as follows. Formation of pseudouridine at positions 38, 39 and 40 in the anticodon stem and loop of transfer RNAs. This chain is tRNA pseudouridine synthase A, found in Caldicellulosiruptor saccharolyticus (strain ATCC 43494 / DSM 8903 / Tp8T 6331).